The chain runs to 360 residues: Peptide chain release factor 1 (360 aa).

Gln-235 carries the N5-methylglutamine modification. Basic and acidic residues predominate over residues Lys-285 to Arg-308. Residues Lys-285–Pro-313 form a disordered region.

The protein belongs to the prokaryotic/mitochondrial release factor family. Methylated by PrmC. Methylation increases the termination efficiency of RF1.

The protein localises to the cytoplasm. Functionally, peptide chain release factor 1 directs the termination of translation in response to the peptide chain termination codons UAG and UAA. This is Peptide chain release factor 1 from Photorhabdus laumondii subsp. laumondii (strain DSM 15139 / CIP 105565 / TT01) (Photorhabdus luminescens subsp. laumondii).